A 179-amino-acid polypeptide reads, in one-letter code: MARLKDYYKKEVIPALISEFGYKNPMQVPVMKKIVVNMGLGEAIQNVKILDSAAGELEMITGQKVVITKAKRSIATFKLRKGMSIGCRVTLRRERMYEFLDRFINVALPRIRDFRGVSPNTFDGRGNYSIGVKEQIIFPEIEYDKIEKIRGMNIAIVTSANTDEEARALLKFMGVPFRS.

Belongs to the universal ribosomal protein uL5 family. As to quaternary structure, part of the 50S ribosomal subunit; part of the 5S rRNA/L5/L18/L25 subcomplex. Contacts the 5S rRNA and the P site tRNA. Forms a bridge to the 30S subunit in the 70S ribosome.

This is one of the proteins that bind and probably mediate the attachment of the 5S RNA into the large ribosomal subunit, where it forms part of the central protuberance. In the 70S ribosome it contacts protein S13 of the 30S subunit (bridge B1b), connecting the 2 subunits; this bridge is implicated in subunit movement. Contacts the P site tRNA; the 5S rRNA and some of its associated proteins might help stabilize positioning of ribosome-bound tRNAs. This chain is Large ribosomal subunit protein uL5, found in Syntrophus aciditrophicus (strain SB).